The sequence spans 148 residues: Probable calcium-binding protein CML7 (148 aa).

EF-hand domains are found at residues 9–44, 80–115, and 116–148; these read EQVASMREAFSLFDTDGDGRIAPSELGVLMRSLGGN, PFDRPLRDAFRVLDKDASGTVSVADLRHVLTSIGEK, and LEPHEFDEWIREVDVAPDGTIRYDDFIRRIVAK. Residues Asp22, Asp24, Asp26, Arg28, Glu33, Asp93, Asp95, Ser97, Thr99, and Asp104 each coordinate Ca(2+).

Potential calcium sensor. This chain is Probable calcium-binding protein CML7 (CML7), found in Oryza sativa subsp. japonica (Rice).